The sequence spans 494 residues: NADPH:adrenodoxin oxidoreductase, mitochondrial (494 aa).

A mitochondrion-targeting transit peptide spans Met1–Phe34. Residues Ala51, Glu72, Leu80, and Val116 each coordinate FAD. Residues Gln187 to Val190, Arg231 to Arg232, and Glu243 contribute to the NADP(+) site. Ser313 carries the post-translational modification Phosphoserine. FAD is bound by residues Trp401 and Gly408–Ile410. An NADP(+)-binding site is contributed by Gly408.

It belongs to the ferredoxin--NADP reductase type 1 family. Monomer. Interacts directly with FDX1. It depends on FAD as a cofactor.

The protein localises to the mitochondrion inner membrane. It carries out the reaction 2 reduced [adrenodoxin] + NADP(+) + H(+) = 2 oxidized [adrenodoxin] + NADPH. The catalysed reaction is 2 reduced [2Fe-2S]-[ferredoxin] + NADP(+) + H(+) = 2 oxidized [2Fe-2S]-[ferredoxin] + NADPH. Its pathway is steroid metabolism; cholesterol metabolism. In terms of biological role, serves as the first electron transfer protein in all the mitochondrial P450 systems including cholesterol side chain cleavage in all steroidogenic tissues, steroid 11-beta hydroxylation in the adrenal cortex, 25-OH-vitamin D3-24 hydroxylation in the kidney, and sterol C-27 hydroxylation in the liver. Also acts as a ferredoxin--NADP(+) reductase essential for coenzyme Q biosynthesis: together with FDX2, transfers the electrons required for the hydroxylation reaction performed by COQ6. This is NADPH:adrenodoxin oxidoreductase, mitochondrial (Fdxr) from Rattus norvegicus (Rat).